Here is a 418-residue protein sequence, read N- to C-terminus: E3 ubiquitin-protein ligase makorin-2 (418 aa).

C3H1-type zinc fingers lie at residues 2–29 (NTKH…HDLA) and 31–58 (SKPS…HVKP). A disordered region spans residues 76–100 (ESTPPLLPTQEAAAPVTKSAPQRRE). Residues 164–191 (DAPQQLCPFAQAGGCHYGESCPYIHGNV) form a C3H1-type 3 zinc finger. The segment at 192-221 (CEICGLQVLHPYDQEQRGHHEKLCMANFER) is makorin-type Cys-His. The RING-type zinc finger occupies 237 to 291 (CSICMERVYDKQSPSERRFGILSNCHHTYCLACIRQWRCARQFENPVIKSCPECR). A C3H1-type 4 zinc finger spans residues 320–349 (GMGKKACKYFDQGRGTCPFGGKCLYLHAYP).

The protein resides in the cytoplasm. It localises to the nucleus. It carries out the reaction S-ubiquitinyl-[E2 ubiquitin-conjugating enzyme]-L-cysteine + [acceptor protein]-L-lysine = [E2 ubiquitin-conjugating enzyme]-L-cysteine + N(6)-ubiquitinyl-[acceptor protein]-L-lysine.. The protein operates within protein modification; protein ubiquitination. In terms of biological role, E3 ubiquitin ligase catalyzing the covalent attachment of ubiquitin moieties onto substrate proteins. Inhibits neurogenesis and axis formation during embryonic development by modulating the phosphatidylinositol 3-kinase (PI3K) pathway. Acts downstream of PI3K and akt1 to up-regulate gsk3b mRNA expression. The protein is E3 ubiquitin-protein ligase makorin-2 (mkrn2) of Xenopus tropicalis (Western clawed frog).